The following is a 210-amino-acid chain: Imidazole glycerol phosphate synthase subunit HisH (210 aa).

Residues 3–210 enclose the Glutamine amidotransferase type-1 domain; sequence TIAIIDYGMG…ILKNFALSKA (208 aa). C81 acts as the Nucleophile in catalysis. Catalysis depends on residues H190 and E192.

In terms of assembly, heterodimer of HisH and HisF.

It is found in the cytoplasm. It carries out the reaction 5-[(5-phospho-1-deoxy-D-ribulos-1-ylimino)methylamino]-1-(5-phospho-beta-D-ribosyl)imidazole-4-carboxamide + L-glutamine = D-erythro-1-(imidazol-4-yl)glycerol 3-phosphate + 5-amino-1-(5-phospho-beta-D-ribosyl)imidazole-4-carboxamide + L-glutamate + H(+). The enzyme catalyses L-glutamine + H2O = L-glutamate + NH4(+). It functions in the pathway amino-acid biosynthesis; L-histidine biosynthesis; L-histidine from 5-phospho-alpha-D-ribose 1-diphosphate: step 5/9. Functionally, IGPS catalyzes the conversion of PRFAR and glutamine to IGP, AICAR and glutamate. The HisH subunit catalyzes the hydrolysis of glutamine to glutamate and ammonia as part of the synthesis of IGP and AICAR. The resulting ammonia molecule is channeled to the active site of HisF. This chain is Imidazole glycerol phosphate synthase subunit HisH, found in Geobacter metallireducens (strain ATCC 53774 / DSM 7210 / GS-15).